The chain runs to 603 residues: Glutathione-regulated potassium-efflux system protein KefB (603 aa).

Helical transmembrane passes span 4–24 (SDFLLAGVLFLFAAVAAVPLA), 29–49 (IGAVLGYLLAGIAIGPWGLGF), 55–75 (EILHFSELGVVFLMFIIGLEL), 87–107 (IFGVGAAQVLLSAALLAGLLM), 115–135 (AAVVGGIGLAMSSTAMALQLM), 152–172 (VLLFQDLAVIPALALVPLLAG), 177–197 (HFDWMKIGMKVLAFVGMLIGG), 207–227 (FIAASGVREVFTAATLLLVLG), 230–250 (LFMDALGLSMALGTFIAGVLL), 268–288 (GLLLGLFFISVGMSLNLGVLY), 291–311 (LLWVVISVVVLVAVKILVLYL), 324–344 (MQFAGVLSQGGEFAFVLFSTA), and 355–375 (MALLLVTVTVTLSMMTTPLLM). One can recognise an RCK N-terminal domain in the interval 402-521 (KPQVIVVGFG…AGVTQFSRET (120 aa)).

The protein belongs to the monovalent cation:proton antiporter 2 (CPA2) transporter (TC 2.A.37) family. KefB subfamily. Interacts with the regulatory subunit KefG.

The protein resides in the cell inner membrane. In terms of biological role, pore-forming subunit of a potassium efflux system that confers protection against electrophiles. Catalyzes K(+)/H(+) antiport. This chain is Glutathione-regulated potassium-efflux system protein KefB, found in Shigella boydii serotype 4 (strain Sb227).